A 482-amino-acid polypeptide reads, in one-letter code: MSQHPRFIATWRDELPGFYTELTPTPLNNSRLLCHNAPLAQALELPETLFDYQGPAGVWGGETLLPGMAPLAQVYSGHQFGVWAGQLGDGRGILLGEQQLSDGCKLDWHLKGAGLTPYSRMGDGRAVLRSTVREFLASEAMHGLGIPTTRALTIVTSDTPVRRETTERGAMLMRIAESHVRFGHFEHFYYRREPERVRELAQYVIEHHFAHLAQEEDRFALWFGEVVTRTAQLMASWQCVGFAHGVMNTDNMSILGLTMDYGPYGFLDDYQPGFICNHTDYQGRYAFDNQPGVGLWNLQRLAQALSPIIPAERLNALLDDYQPALLREWGRQMRAKLGFTVEKEGDNDYLRELLTLMAREGSDYTRTFRMLSETEQHSSASPLRDEFIDRATFDAWFARYRARLEEEGEEDDARQRLMKSVNPALVLRNWLAQRAIEAAERDDASELSRLLEALRNPFADRDDDYTHRPPDWGKHLEVSCSS.

ATP is bound by residues Gly-88, Gly-90, Arg-91, Lys-111, Asp-123, Gly-124, Arg-174, and Arg-181. Asp-250 functions as the Proton acceptor in the catalytic mechanism. Asn-251 and Asp-260 together coordinate Mg(2+). An ATP-binding site is contributed by Asp-260.

It belongs to the SELO family. Mg(2+) serves as cofactor. The cofactor is Mn(2+).

The enzyme catalyses L-seryl-[protein] + ATP = 3-O-(5'-adenylyl)-L-seryl-[protein] + diphosphate. The catalysed reaction is L-threonyl-[protein] + ATP = 3-O-(5'-adenylyl)-L-threonyl-[protein] + diphosphate. It carries out the reaction L-tyrosyl-[protein] + ATP = O-(5'-adenylyl)-L-tyrosyl-[protein] + diphosphate. It catalyses the reaction L-histidyl-[protein] + UTP = N(tele)-(5'-uridylyl)-L-histidyl-[protein] + diphosphate. The enzyme catalyses L-seryl-[protein] + UTP = O-(5'-uridylyl)-L-seryl-[protein] + diphosphate. The catalysed reaction is L-tyrosyl-[protein] + UTP = O-(5'-uridylyl)-L-tyrosyl-[protein] + diphosphate. In terms of biological role, nucleotidyltransferase involved in the post-translational modification of proteins. It can catalyze the addition of adenosine monophosphate (AMP) or uridine monophosphate (UMP) to a protein, resulting in modifications known as AMPylation and UMPylation. In Cronobacter sakazakii (strain ATCC BAA-894) (Enterobacter sakazakii), this protein is Protein nucleotidyltransferase YdiU.